Reading from the N-terminus, the 350-residue chain is Biotin synthase (350 aa).

Positions 38–256 (NHVQVSTLLS…IAVARIMMPE (219 aa)) constitute a Radical SAM core domain. Residues Cys-53, Cys-57, and Cys-60 each contribute to the [4Fe-4S] cluster site. 4 residues coordinate [2Fe-2S] cluster: Cys-97, Cys-128, Cys-188, and Arg-260.

Belongs to the radical SAM superfamily. Biotin synthase family. As to quaternary structure, homodimer. It depends on [4Fe-4S] cluster as a cofactor. [2Fe-2S] cluster serves as cofactor.

The catalysed reaction is (4R,5S)-dethiobiotin + (sulfur carrier)-SH + 2 reduced [2Fe-2S]-[ferredoxin] + 2 S-adenosyl-L-methionine = (sulfur carrier)-H + biotin + 2 5'-deoxyadenosine + 2 L-methionine + 2 oxidized [2Fe-2S]-[ferredoxin]. Its pathway is cofactor biosynthesis; biotin biosynthesis; biotin from 7,8-diaminononanoate: step 2/2. Catalyzes the conversion of dethiobiotin (DTB) to biotin by the insertion of a sulfur atom into dethiobiotin via a radical-based mechanism. This is Biotin synthase from Aliivibrio fischeri (strain ATCC 700601 / ES114) (Vibrio fischeri).